A 292-amino-acid polypeptide reads, in one-letter code: Elongation factor Ts (292 aa).

The interval 80–83 (TDFV) is involved in Mg(2+) ion dislocation from EF-Tu.

Belongs to the EF-Ts family.

It localises to the cytoplasm. Associates with the EF-Tu.GDP complex and induces the exchange of GDP to GTP. It remains bound to the aminoacyl-tRNA.EF-Tu.GTP complex up to the GTP hydrolysis stage on the ribosome. The protein is Elongation factor Ts of Cupriavidus taiwanensis (strain DSM 17343 / BCRC 17206 / CCUG 44338 / CIP 107171 / LMG 19424 / R1) (Ralstonia taiwanensis (strain LMG 19424)).